The following is a 221-amino-acid chain: UPF0502 protein Sputcn32_1644 (221 aa).

The protein belongs to the UPF0502 family.

This chain is UPF0502 protein Sputcn32_1644, found in Shewanella putrefaciens (strain CN-32 / ATCC BAA-453).